Consider the following 116-residue polypeptide: Putative gamma-glutamylcyclotransferase PH0828 (116 aa).

13–16 contacts substrate; that stretch reads YGTL. The active-site Proton acceptor is the Glu76.

Belongs to the gamma-glutamylcyclotransferase family.

In terms of biological role, putative gamma-glutamylcyclotransferase. This is Putative gamma-glutamylcyclotransferase PH0828 from Pyrococcus horikoshii (strain ATCC 700860 / DSM 12428 / JCM 9974 / NBRC 100139 / OT-3).